Consider the following 444-residue polypeptide: Argininosuccinate synthase (444 aa).

ATP contacts are provided by residues Ala18 to Ser26 and Ala44. Residue Tyr100 participates in L-citrulline binding. Residues Gly130 and Thr132 each contribute to the ATP site. The L-aspartate site is built by Thr132, Asn136, and Asp137. Asn136 contributes to the L-citrulline binding site. Asp137 serves as a coordination point for ATP. The L-citrulline site is built by Arg140 and Ser193. ATP is bound at residue Asp195. L-citrulline-binding residues include Thr202, Glu204, and Glu281.

This sequence belongs to the argininosuccinate synthase family. Type 2 subfamily. Homotetramer.

The protein resides in the cytoplasm. It carries out the reaction L-citrulline + L-aspartate + ATP = 2-(N(omega)-L-arginino)succinate + AMP + diphosphate + H(+). Its pathway is amino-acid biosynthesis; L-arginine biosynthesis; L-arginine from L-ornithine and carbamoyl phosphate: step 2/3. The protein is Argininosuccinate synthase of Haemophilus influenzae (strain PittGG).